A 187-amino-acid chain; its full sequence is uncharacterized protein (187 aa).

An N-terminal signal peptide occupies residues 1–25 (MSKFVKTAIAAAMVMGAFTSTATIA).

Belongs to the fimbrial protein family.

Functionally, part of the yfcOPQRSUV fimbrial operon. Could contribute to adhesion to various surfaces in specific environmental niches. Increases adhesion to eukaryotic T24 bladder epithelial cells in the absence of fim genes. This is an uncharacterized protein from Escherichia coli (strain K12).